The chain runs to 236 residues: Small ribosomal subunit protein uS10m (236 aa).

Residues 1–24 constitute a mitochondrion transit peptide; sequence MMRQSIRPLRAFSSEVSWIARRTQ. Residues 29-49 form a disordered region; it reads KPGDLVPNKPEPSKNEQEPRF. Residues 39 to 49 show a composition bias toward basic and acidic residues; that stretch reads EPSKNEQEPRF.

It belongs to the universal ribosomal protein uS10 family. As to quaternary structure, part of the mitochondrial small ribosomal subunit.

It localises to the mitochondrion. Its function is as follows. Involved in mitochondrial genome encoded proteins translation. Involved in the binding of tRNA to the ribosomes. This chain is Small ribosomal subunit protein uS10m (RSM10), found in Gibberella zeae (strain ATCC MYA-4620 / CBS 123657 / FGSC 9075 / NRRL 31084 / PH-1) (Wheat head blight fungus).